A 257-amino-acid chain; its full sequence is Non-homologous end joining protein Ku (257 aa).

One can recognise a Ku domain in the interval 9-184 (TFGMVAIPIG…YTKPEVNEQE (176 aa)).

It belongs to the prokaryotic Ku family. Homodimer. Interacts with LigD.

Its function is as follows. With LigD forms a non-homologous end joining (NHEJ) DNA repair enzyme, which repairs dsDNA breaks with reduced fidelity. Binds linear dsDNA with 5'- and 3'- overhangs but not closed circular dsDNA nor ssDNA. Recruits and stimulates the ligase activity of LigD. The sequence is that of Non-homologous end joining protein Ku from Lachnoclostridium phytofermentans (strain ATCC 700394 / DSM 18823 / ISDg) (Clostridium phytofermentans).